The chain runs to 460 residues: Argininosuccinate lyase (460 aa).

The protein belongs to the lyase 1 family. Argininosuccinate lyase subfamily.

The protein localises to the cytoplasm. The enzyme catalyses 2-(N(omega)-L-arginino)succinate = fumarate + L-arginine. It functions in the pathway amino-acid biosynthesis; L-arginine biosynthesis; L-arginine from L-ornithine and carbamoyl phosphate: step 3/3. This Staphylococcus haemolyticus (strain JCSC1435) protein is Argininosuccinate lyase.